The sequence spans 538 residues: MPRGWAAPLLLLLLQGGWGCPDLVCYTDYLQTVICILEMWNLHPSTLTLTWQDQYEELKDEATSCSLHRSAHNATHATYTCHMDVFHFMADDIFSVNITDQSGNYSQECGSFLLAESIKPAPPFNVTVTFSGQYNISWRSDYEDPAFYMLKGKLQYELQYRNRGDPWAVSPRRKLISVDSRSVSLLPLEFRKDSSYELQVRAGPMPGSSYQGTWSEWSDPVIFQTQSEELKEGWNPHLLLLLLLVIVFIPAFWSLKTHPLWRLWKKIWAVPSPERFFMPLYKGCSGDFKKWVGAPFTGSSLELGPWSPEVPSTLEVYSCHPPRSPAKRLQLTELQEPAELVESDGVPKPSFWPTAQNSGGSAYSEERDRPYGLVSIDTVTVLDAEGPCTWPCSCEDDGYPALDLDAGLEPSPGLEDPLLDAGTTVLSCGCVSAGSPGLGGPLGSLLDRLKPPLADGEDWAGGLPWGGRSPGGVSESEAGSPLAGLDMDTFDSGFVGSDCSSPVECDFTSPGDEGPPRSYLRQWVVIPPPLSSPGPQAS.

Positions 1 to 19 (MPRGWAAPLLLLLLQGGWG) are cleaved as a signal peptide. 3 disulfide bridges follow: C20/C109, C25/C35, and C65/C81. Residues 20 to 232 (CPDLVCYTDY…FQTQSEELKE (213 aa)) lie on the Extracellular side of the membrane. 2 consecutive Fibronectin type-III domains span residues 21-118 (PDLV…AESI) and 119-228 (KPAP…TQSE). Residues N73, N97, N104, N125, and N135 are each glycosylated (N-linked (GlcNAc...) asparagine). Residue W214 is glycosylated (C-linked (Man) tryptophan). The WSXWS motif motif lies at 214–218 (WSEWS). A helical membrane pass occupies residues 233–253 (GWNPHLLLLLLLVIVFIPAFW). The Cytoplasmic portion of the chain corresponds to 254–538 (SLKTHPLWRL…PLSSPGPQAS (285 aa)). The short motif at 266–274 (KIWAVPSPE) is the Box 1 motif element. 2 disordered regions span residues 342-367 (ESDGVPKPSFWPTAQNSGGSAYSEER) and 457-487 (EDWAGGLPWGGRSPGGVSESEAGSPLAGLDM).

This sequence belongs to the type I cytokine receptor family. Type 4 subfamily. As to quaternary structure, heterodimer with the common gamma subunit. Associates with JAK1. C-mannosylated at Trp-214 in the WSXWS motif, the sugar chain makes extensive hydrogen bonds with Asn-73 sugar, and bridges the two fibronectin domains transforming the V-shaped receptor into an A-frame. As to expression, selectively expressed in lymphoid tissues. Most highly expressed in thymus and spleen.

It localises to the membrane. This is a receptor for interleukin-21. This is Interleukin-21 receptor (IL21R) from Homo sapiens (Human).